We begin with the raw amino-acid sequence, 137 residues long: Small ribosomal subunit protein bS16m (137 aa).

A mitochondrion-targeting transit peptide spans 1–34 (MVHLTTLLCKAYRGGHLTIRLALGGCTNRPFYRI). Phosphothreonine is present on Thr130.

This sequence belongs to the bacterial ribosomal protein bS16 family. In terms of assembly, component of the mitochondrial small ribosomal subunit (mt-SSU). Mature mammalian 55S mitochondrial ribosomes consist of a small (28S) and a large (39S) subunit. The 28S small subunit contains a 12S ribosomal RNA (12S mt-rRNA) and 30 different proteins. The 39S large subunit contains a 16S rRNA (16S mt-rRNA), a copy of mitochondrial valine transfer RNA (mt-tRNA(Val)), which plays an integral structural role, and 52 different proteins. bS16m has a zinc binding site.

It localises to the mitochondrion. The polypeptide is Small ribosomal subunit protein bS16m (MRPS16) (Homo sapiens (Human)).